Here is an 89-residue protein sequence, read N- to C-terminus: Small ribosomal subunit protein uS15 (89 aa).

This sequence belongs to the universal ribosomal protein uS15 family. As to quaternary structure, part of the 30S ribosomal subunit. Forms a bridge to the 50S subunit in the 70S ribosome, contacting the 23S rRNA.

Its function is as follows. One of the primary rRNA binding proteins, it binds directly to 16S rRNA where it helps nucleate assembly of the platform of the 30S subunit by binding and bridging several RNA helices of the 16S rRNA. Forms an intersubunit bridge (bridge B4) with the 23S rRNA of the 50S subunit in the ribosome. In Elusimicrobium minutum (strain Pei191), this protein is Small ribosomal subunit protein uS15.